Consider the following 266-residue polypeptide: Undecaprenyl-diphosphatase (266 aa).

8 helical membrane-spanning segments follow: residues 1–21 (METFQIILLALIQGLTEFLPI), 39–59 (QGFSFDVAVNTGSLLAVVIYF), 87–107 (WWIILATIPAVIFGFAAKDFI), 111–131 (LRNTTVIASTTIIFGLLLWWA), 149–169 (ALLIGFAQALAIIPGTSRSGA), 183–203 (AAAKFSFLMSVPVGLGAAILV), 218–238 (ALGIGMLVSFLAAYACIYYFL), and 246–266 (MTPFVIYRLILGSVLFALILW).

The protein belongs to the UppP family.

The protein resides in the cell inner membrane. The enzyme catalyses di-trans,octa-cis-undecaprenyl diphosphate + H2O = di-trans,octa-cis-undecaprenyl phosphate + phosphate + H(+). Its function is as follows. Catalyzes the dephosphorylation of undecaprenyl diphosphate (UPP). Confers resistance to bacitracin. This Shewanella denitrificans (strain OS217 / ATCC BAA-1090 / DSM 15013) protein is Undecaprenyl-diphosphatase.